Here is a 79-residue protein sequence, read N- to C-terminus: Small ribosomal subunit protein bS18 (79 aa).

This sequence belongs to the bacterial ribosomal protein bS18 family. In terms of assembly, part of the 30S ribosomal subunit. Forms a tight heterodimer with protein bS6.

Its function is as follows. Binds as a heterodimer with protein bS6 to the central domain of the 16S rRNA, where it helps stabilize the platform of the 30S subunit. The sequence is that of Small ribosomal subunit protein bS18 from Nitrobacter hamburgensis (strain DSM 10229 / NCIMB 13809 / X14).